The following is a 497-amino-acid chain: Aspartyl/glutamyl-tRNA(Asn/Gln) amidotransferase subunit B (497 aa).

This sequence belongs to the GatB/GatE family. GatB subfamily. Heterotrimer of A, B and C subunits.

It catalyses the reaction L-glutamyl-tRNA(Gln) + L-glutamine + ATP + H2O = L-glutaminyl-tRNA(Gln) + L-glutamate + ADP + phosphate + H(+). The catalysed reaction is L-aspartyl-tRNA(Asn) + L-glutamine + ATP + H2O = L-asparaginyl-tRNA(Asn) + L-glutamate + ADP + phosphate + 2 H(+). In terms of biological role, allows the formation of correctly charged Asn-tRNA(Asn) or Gln-tRNA(Gln) through the transamidation of misacylated Asp-tRNA(Asn) or Glu-tRNA(Gln) in organisms which lack either or both of asparaginyl-tRNA or glutaminyl-tRNA synthetases. The reaction takes place in the presence of glutamine and ATP through an activated phospho-Asp-tRNA(Asn) or phospho-Glu-tRNA(Gln). The chain is Aspartyl/glutamyl-tRNA(Asn/Gln) amidotransferase subunit B from Novosphingobium aromaticivorans (strain ATCC 700278 / DSM 12444 / CCUG 56034 / CIP 105152 / NBRC 16084 / F199).